Reading from the N-terminus, the 87-residue chain is UPF0250 protein BUAPTUC7_482 (87 aa).

It belongs to the UPF0250 family.

In Buchnera aphidicola subsp. Acyrthosiphon pisum (strain Tuc7), this protein is UPF0250 protein BUAPTUC7_482.